Consider the following 818-residue polypeptide: Cation/H(+) antiporter 6A (818 aa).

Transmembrane regions (helical) follow at residues 51 to 71, 88 to 110, 123 to 143, 156 to 176, 192 to 212, 222 to 242, 248 to 268, 288 to 308, 310 to 330, 340 to 360, 376 to 396, 409 to 429, and 438 to 458; these read NFWE…FFIW, FTYM…KSWI, VAET…GVTM, SVIG…TFRY, LIIF…LKDL, IALS…FFNA, LYGF…ICVV, FYLY…NKVI, LFGP…YPLG, FNLG…VDLL, IYEV…VTTI, FALA…YTYA, and EVFT…PMLL.

The protein belongs to the monovalent cation:proton antiporter 2 (CPA2) transporter (TC 2.A.37) family. CHX (TC 2.A.37.4) subfamily. In terms of tissue distribution, preferentially expressed in pollen.

It is found in the membrane. Its function is as follows. May operate as a cation/H(+) antiporter. The protein is Cation/H(+) antiporter 6A (CHX6a) of Arabidopsis thaliana (Mouse-ear cress).